We begin with the raw amino-acid sequence, 237 residues long: MELTAKPRTPKQKLDESMIAAVAYNKENNVSFALDRKAFDRAFRQQSTTGLFDITVEGGETFPALVKAVQMDKRKRAPIHVDFYMVTYGEPVEVSVPVHTTGRSQGEVQGGLVDIVVHNLQIVAPGPRRIPQELVVDVTKMNIGDHITAGDIKLPEGCTLAADPELTVVSVLPPRLTAEELEAEVQAAQVAGLVAAGELSEEAAEAVLEGDASLEEVKAEASEDNAGTDSEDNSDAQ.

An N-terminal domain region spans residues 1-104 (MELTAKPRTP…SVPVHTTGRS (104 aa)). The segment at 105–189 (QGEVQGGLVD…ELEAEVQAAQ (85 aa)) is middle domain. A C-terminal domain region spans residues 190–237 (VAGLVAAGELSEEAAEAVLEGDASLEEVKAEASEDNAGTDSEDNSDAQ). The disordered stretch occupies residues 205-237 (EAVLEGDASLEEVKAEASEDNAGTDSEDNSDAQ).

This sequence belongs to the bacterial ribosomal protein bL25 family. CTC subfamily. In terms of assembly, part of the 50S ribosomal subunit. Contacts proteins L11 and L16, the A site tRNA, and the 5S and 23S rRNAs.

Functionally, this is one of 3 proteins that mediate the attachment of the 5S rRNA onto the large ribosomal subunit. This protein has three domains. The N-terminal one is bound on the solvent face, the middle domain fills the space between the 5S rRNA and the L11 arm contacting the 23S rRNA while the C-terminal domain is on the edge of the intersubunit interface and contacts the A site. The protein conformation changes upon binding of a tRNA mimic to the A site, although the mimic does not interact directly with CTC itself, consistent with CTCs presumed role in moderating A site binding. This Deinococcus radiodurans (strain ATCC 13939 / DSM 20539 / JCM 16871 / CCUG 27074 / LMG 4051 / NBRC 15346 / NCIMB 9279 / VKM B-1422 / R1) protein is Large ribosomal subunit protein bL25 (rplY).